The chain runs to 284 residues: Elongation factor Ts (284 aa).

Positions 80 to 83 (TDFV) are involved in Mg(2+) ion dislocation from EF-Tu.

Belongs to the EF-Ts family.

The protein localises to the cytoplasm. Functionally, associates with the EF-Tu.GDP complex and induces the exchange of GDP to GTP. It remains bound to the aminoacyl-tRNA.EF-Tu.GTP complex up to the GTP hydrolysis stage on the ribosome. This Neisseria meningitidis serogroup C (strain 053442) protein is Elongation factor Ts.